The primary structure comprises 588 residues: MASLSLSSAHFSSTSSSSRSSISTSSLSPSSTSLPLLQSPIRRRYRSLRRRLSFSVIPRRTSRSFSTSNSQIRCSINEPLKVMISGAPASGKGTQCELIVHKFGLVHISTGDLLRAEVSSGTDIGKRAKEFMNSGSLVPDEIVIAMVAGRLSREDAKEHGWLLDGFPRSFAQAQSLDKLNVKPDIFILLDVPDEILIDRCVGRRLDPVTGKIYHIKNYPPESDEIKARLVTRPDDTEEKVKARLQIYKQNSEAIISAYSDVMVKIDANRPKEVVFEETQTLLSQIQLKRMIKTDKASPVQDKWRGIPTRLNNIPHSRDIRAYFYEDVLQATIRSIKDGNTRLRVDINIPELNPEMDVYRIGTLMELVQALALSFADDGKRVKVCVQGSMGEGALAGMPLQLAGTRKILEYMDWGDDETLGTFVKLGAIGGKEVDEEDDMFILVAPQNAVGNCIIDDLQAMTTAAGKRPVVLINPRLKDLPASSGIMQTMGREQRLEYALTFDNCYVFRLLYYLGTQYPIMGALRMSYPYRYELYKRVNEENGKEKYVLLATYAERPTPEQIDDAFSGKSRDQSKKASGIWGFLSSVFS.

Residues 1–34 (MASLSLSSAHFSSTSSSSRSSISTSSLSPSSTSL) form a disordered region. The transit peptide at 1–73 (MASLSLSSAH…SFSTSNSQIR (73 aa)) directs the protein to the chloroplast. 89–94 (ASGKGT) serves as a coordination point for ATP. The NMP stretch occupies residues 109-138 (STGDLLRAEVSSGTDIGKRAKEFMNSGSLV). Residues Arg-115, 136 to 138 (SLV), 165 to 168 (GFPR), and Gln-172 contribute to the AMP site. Positions 202–235 (GRRLDPVTGKIYHIKNYPPESDEIKARLVTRPDD) are LID. Arg-203 provides a ligand contact to ATP. 2 residues coordinate AMP: Arg-232 and Arg-243.

This sequence belongs to the adenylate kinase family. Monomer.

The protein resides in the plastid. It is found in the chloroplast. It carries out the reaction AMP + ATP = 2 ADP. Its function is as follows. Catalyzes the reversible transfer of the terminal phosphate group between ATP and AMP. The polypeptide is Adenylate kinase 5, chloroplastic (Arabidopsis thaliana (Mouse-ear cress)).